A 110-amino-acid polypeptide reads, in one-letter code: Large ribosomal subunit protein uL22 (110 aa).

It belongs to the universal ribosomal protein uL22 family. As to quaternary structure, part of the 50S ribosomal subunit.

In terms of biological role, this protein binds specifically to 23S rRNA; its binding is stimulated by other ribosomal proteins, e.g. L4, L17, and L20. It is important during the early stages of 50S assembly. It makes multiple contacts with different domains of the 23S rRNA in the assembled 50S subunit and ribosome. Its function is as follows. The globular domain of the protein is located near the polypeptide exit tunnel on the outside of the subunit, while an extended beta-hairpin is found that lines the wall of the exit tunnel in the center of the 70S ribosome. This is Large ribosomal subunit protein uL22 from Histophilus somni (strain 129Pt) (Haemophilus somnus).